Reading from the N-terminus, the 262-residue chain is Transcription factor of morphogenesis MCM1 (262 aa).

Disordered regions lie at residues 1–62 (MAIK…ERRK) and 140–262 (EEGL…QQYQ). A compositionally biased stretch (low complexity) spans 17–35 (NSHSTNNNNNSNNSNSNNN). The region spanning 58 to 118 (KERRKIEIKF…GLVYTFTTPK (61 aa)) is the MADS-box domain. The span at 150-170 (QSDGNTGDSPDQSPAPATNPN) shows a compositional bias: polar residues. Low complexity-rich tracts occupy residues 182-198 (QQQQ…AQQQ), 224-239 (PQQQ…LQGG), and 249-262 (NIQN…QQYQ).

Interacts with AHR1.

Its subcellular location is the nucleus. Its function is as follows. Transcription factor that is recruited by AHR1 to the promoters of genes involved in biofilm formation, which include several key adhesion genes. Plays an important role in cell adhesion, hyphal growth and virulence. Implicated in the regulation of opaque-phase-specific gene expression. This Candida albicans (strain SC5314 / ATCC MYA-2876) (Yeast) protein is Transcription factor of morphogenesis MCM1 (MCM1).